The chain runs to 265 residues: Phosphonates import ATP-binding protein PhnC 1 (265 aa).

An ABC transporter domain is found at Leu3–Gln247. Residue Gly36 to Thr43 coordinates ATP.

This sequence belongs to the ABC transporter superfamily. Phosphonates importer (TC 3.A.1.9.1) family. As to quaternary structure, the complex is composed of two ATP-binding proteins (PhnC), two transmembrane proteins (PhnE) and a solute-binding protein (PhnD).

The protein resides in the cell inner membrane. It catalyses the reaction phosphonate(out) + ATP + H2O = phosphonate(in) + ADP + phosphate + H(+). Part of the ABC transporter complex PhnCDE involved in phosphonates import. Responsible for energy coupling to the transport system. The sequence is that of Phosphonates import ATP-binding protein PhnC 1 from Pseudomonas syringae pv. syringae (strain B728a).